Consider the following 344-residue polypeptide: Anthranilate phosphoribosyltransferase (344 aa).

Residues Gly85, 88–89 (GD), Thr93, 95–98 (NIST), 113–121 (KHGNRSVSS), and Ser125 each bind 5-phospho-alpha-D-ribose 1-diphosphate. An anthranilate-binding site is contributed by Gly85. Ser97 is a Mg(2+) binding site. Asn116 is an anthranilate binding site. Arg171 is an anthranilate binding site. 2 residues coordinate Mg(2+): Asp229 and Glu230.

It belongs to the anthranilate phosphoribosyltransferase family. As to quaternary structure, homodimer. Mg(2+) is required as a cofactor.

It carries out the reaction N-(5-phospho-beta-D-ribosyl)anthranilate + diphosphate = 5-phospho-alpha-D-ribose 1-diphosphate + anthranilate. It participates in amino-acid biosynthesis; L-tryptophan biosynthesis; L-tryptophan from chorismate: step 2/5. In terms of biological role, catalyzes the transfer of the phosphoribosyl group of 5-phosphorylribose-1-pyrophosphate (PRPP) to anthranilate to yield N-(5'-phosphoribosyl)-anthranilate (PRA). This Shewanella amazonensis (strain ATCC BAA-1098 / SB2B) protein is Anthranilate phosphoribosyltransferase.